A 402-amino-acid polypeptide reads, in one-letter code: Major outer membrane porin (402 aa).

Positions 1-22 (MKKLLKSALLFAATGSALSLQA) are cleaved as a signal peptide.

The protein belongs to the chlamydial porin (CP) (TC 1.B.2) family. In terms of assembly, part of a disulfide cross-linked outer membrane complex (COMC) composed of the major outer membrane porin (MOMP), the small cysteine-rich protein (OmcA) and the large cysteine-rich periplasmic protein (OmcB).

It is found in the cell outer membrane. In terms of biological role, in elementary bodies (EBs, the infectious stage, which is able to survive outside the host cell) provides the structural integrity of the outer envelope through disulfide cross-links with the small cysteine-rich protein and the large cysteine-rich periplasmic protein. It has been described in publications as the Sarkosyl-insoluble COMC (Chlamydia outer membrane complex), and serves as the functional equivalent of peptidoglycan. It is present but some of the disulfide bonds are reduced in reticulate bodies (RBs). Its function is as follows. Permits diffusion of specific solutes through the outer membrane. In Chlamydophila psittaci (strain ATCC VR-125 / 6BC) (Chlamydia psittaci), this protein is Major outer membrane porin (ompA).